Here is a 172-residue protein sequence, read N- to C-terminus: MNSYGVILISYVGLIKLALAGILCYGIYLAIKSEKNLIKDALFVYKDNNFNVFGKKYALMIFLAFGFPIFFIGSFLYLFWEKLPEGFRFSLTFAITFFVLFIFGLLFVKYKIRVCKNGIYVGFRFITWKGFEGYKIENNKIILIGKKGVTYPVHLKYSKELEDIIKNYLKKI.

Transmembrane regions (helical) follow at residues 7 to 27 (ILISYVGLIKLALAGILCYGI), 59 to 79 (LMIFLAFGFPIFFIGSFLYLF), and 89 to 109 (FSLTFAITFFVLFIFGLLFVK).

To M.jannaschii MJ0695.

Its subcellular location is the cell membrane. This is an uncharacterized protein from Methanocaldococcus jannaschii (strain ATCC 43067 / DSM 2661 / JAL-1 / JCM 10045 / NBRC 100440) (Methanococcus jannaschii).